The sequence spans 314 residues: 3'-5' exoribonuclease YhaM (314 aa).

The HD domain maps to 163-279 (HVVSMLDLAK…LHYIDNLDAK (117 aa)).

The protein belongs to the YhaM family.

Functionally, shows a 3'-5' exoribonuclease activity. The chain is 3'-5' exoribonuclease YhaM from Bacillus cereus (strain AH187).